A 553-amino-acid polypeptide reads, in one-letter code: NAD(P)H-quinone oxidoreductase chain 4 2 (553 aa).

The next 14 helical transmembrane spans lie at 6 to 26 (FPWL…IPVI), 34 to 54 (VRWF…YVFL), 87 to 107 (ISAP…LAAW), 115 to 135 (LFYF…VAQD), 136 to 156 (LLLF…LVSI), 169 to 189 (FLLY…AMAL), 210 to 230 (ALEL…LAIF), 244 to 264 (SAPV…YGLI), 276 to 296 (IYFA…GAFA), 312 to 332 (VSHM…GISG), 333 to 353 (AMLQ…LAGV), 376 to 396 (VFAL…MSGF), 418 to 438 (VVTV…LLSM), and 487 to 507 (IFIA…PQLA).

It belongs to the complex I subunit 4 family.

It localises to the cellular thylakoid membrane. It catalyses the reaction a plastoquinone + NADH + (n+1) H(+)(in) = a plastoquinol + NAD(+) + n H(+)(out). The catalysed reaction is a plastoquinone + NADPH + (n+1) H(+)(in) = a plastoquinol + NADP(+) + n H(+)(out). In terms of biological role, NDH-1 shuttles electrons from NAD(P)H, via FMN and iron-sulfur (Fe-S) centers, to quinones in the respiratory chain. The immediate electron acceptor for the enzyme in this species is believed to be plastoquinone. Couples the redox reaction to proton translocation (for every two electrons transferred, four hydrogen ions are translocated across the cytoplasmic membrane), and thus conserves the redox energy in a proton gradient. The sequence is that of NAD(P)H-quinone oxidoreductase chain 4 2 from Microcystis aeruginosa (strain NIES-843 / IAM M-2473).